A 406-amino-acid polypeptide reads, in one-letter code: Succinylornithine transaminase (406 aa).

K252 bears the N6-(pyridoxal phosphate)lysine mark.

It belongs to the class-III pyridoxal-phosphate-dependent aminotransferase family. AstC subfamily. Pyridoxal 5'-phosphate is required as a cofactor.

The catalysed reaction is N(2)-succinyl-L-ornithine + 2-oxoglutarate = N-succinyl-L-glutamate 5-semialdehyde + L-glutamate. The protein operates within amino-acid degradation; L-arginine degradation via AST pathway; L-glutamate and succinate from L-arginine: step 3/5. Functionally, catalyzes the transamination of N(2)-succinylornithine and alpha-ketoglutarate into N(2)-succinylglutamate semialdehyde and glutamate. Can also act as an acetylornithine aminotransferase. In Shigella sonnei (strain Ss046), this protein is Succinylornithine transaminase.